The sequence spans 475 residues: Pyruvate kinase (475 aa).

Arg-33 lines the substrate pocket. Residues Asn-35, Ser-37, and Asp-67 each contribute to the K(+) site. 35-38 (NFSH) is a binding site for ATP. The ATP site is built by Arg-74 and Lys-155. Glu-220 is a binding site for Mg(2+). Substrate-binding residues include Gly-243, Asp-244, and Thr-276. Asp-244 lines the Mg(2+) pocket.

Belongs to the pyruvate kinase family. Homotetramer. The cofactor is Mg(2+). It depends on K(+) as a cofactor.

The catalysed reaction is pyruvate + ATP = phosphoenolpyruvate + ADP + H(+). It functions in the pathway carbohydrate degradation; glycolysis; pyruvate from D-glyceraldehyde 3-phosphate: step 5/5. The sequence is that of Pyruvate kinase (pyk) from Corynebacterium glutamicum (strain ATCC 13032 / DSM 20300 / JCM 1318 / BCRC 11384 / CCUG 27702 / LMG 3730 / NBRC 12168 / NCIMB 10025 / NRRL B-2784 / 534).